The primary structure comprises 594 residues: Transcription factor BYE1 (594 aa).

A compositionally biased stretch (polar residues) spans 1 to 13; the sequence is MSVRTSSRSNKGQ. Residues 1-65 form a disordered region; the sequence is MSVRTSSRSN…DTENVRTDEV (65 aa). The segment covering 36–63 has biased composition (basic and acidic residues); the sequence is KVDSATEKNKKSDSSQEPRKDTENVRTD. The PHD-type zinc finger occupies 72 to 134; the sequence is YVRCLCGANN…KYYCELCDPS (63 aa). Residues 142–231 are disordered; sequence SKEAEVSEDE…EMPTRKDFES (90 aa). Residues 155 to 164 are compositionally biased toward basic and acidic residues; the sequence is DDVYKPVNDH. The segment covering 165 to 175 has biased composition (acidic residues); the sequence is DDNDADVFLDE. At Ser177 the chain carries Phosphoserine. Over residues 191 to 208 the composition is skewed to basic residues; the sequence is IHIKSKQVKKSNGSKKRN. Positions 209-231 are enriched in basic and acidic residues; it reads KSIDAAKSDTAENEMPTRKDFES. A TFIIS central domain is found at 254–365; that stretch reads VPETIEAKLY…DKVILENFIV (112 aa).

This sequence belongs to the BYE1 family. As to quaternary structure, interacts with the RNA polymerase RPB1 subunit and specifically with the trimethylated H3 histone H3K4me3.

It is found in the nucleus. Functionally, negative regulator of transcription elongation. The protein is Transcription factor BYE1 (BYE1) of Saccharomyces cerevisiae (strain YJM789) (Baker's yeast).